The following is an 80-amino-acid chain: MAASKTTIFIVFVLCLSCTLLVNISGIQATSSTLKESLTAEIKPTKVDRCKTDRDCPQSHRCQKDFYYGCVVGECICRAV.

Positions 1-29 (MAASKTTIFIVFVLCLSCTLLVNISGIQA) are cleaved as a signal peptide. 3 disulfide bridges follow: Cys-50/Cys-70, Cys-56/Cys-75, and Cys-62/Cys-77.

It belongs to the DEFL family.

The protein localises to the secreted. This Arabidopsis thaliana (Mouse-ear cress) protein is Defensin-like protein 291.